The sequence spans 764 residues: MFSKLTSILQHAVEALAPSLPLQEDFVYHWKAITHYYIETSDDKAPVTDTNIPSHLEQMLDILVQEENERESGETGPCMEYLLHHKILETLYTLGKADCPPGMKQQVLVFYTKLLGRIRQPLLPHINVHRPVQKLIRLCGEVLATPTENEEIQFLCIVCAKLKQDPYLVNFFLENKSKSLVSRGALSVISEDGPKGQDPGSGDVSQCQQPQELSGATGVEPTESEEEPPHQMDDLSASLDDLNVTSLPEASAVRPNQDYNLVNSLLNLTRSPDGRIAVKACEGLMLLVSLPEPAAAKCLAQSTCLCELLTGRLTSLYKALPQSVDPLDIETVEAVNWGLDSYSHKEDASAFPGKRALISFLSWFDYCDQLIKEAQKTAAVALAKAIHERFFVGVMEPQLMQTSEMGILTSTALLHRIVRQVTSDVLLQEMVVFILGEQREPETLSEISRHPLRHRLIEHCDHISDEISIMTLRMFEHLLQKPNEHILYNLVLRNLEERNYTENKPSCPEDKDVVENGLIAGAVDLEEDPLFTDISPDNTLPNQEWICSPRTSPDHPKNDGKTEVHKVVNSFLCLVPDDAKSSYHVEGTGYDTYLRDAHRQFRDYCAICSRWEWPGAPKPLEKCDLEAAFFEGHFLKVLFDRMGRILDQPYDVNLQVTSVLSRLSLFPHPHTHEYLLDPYINLASGCRSLFSVIVRVVGDLMVRIQRIQDFTPKLLLVRKRLLGLEPEGPIVDHITLLEGVIVLEEFCKELAAIAFVKYHASATP.

The segment at Ser-190–Ser-236 is disordered. A compositionally biased stretch (polar residues) spans Asp-203–Ser-214.

This sequence belongs to the FHIP family.

In terms of biological role, may be required for proper functioning of the nervous system. The sequence is that of FHF complex subunit HOOK interacting protein 2A from Mus musculus (Mouse).